The primary structure comprises 298 residues: Acetylglutamate kinase (298 aa).

Residues 69–70 (GG), arginine 91, and asparagine 196 contribute to the substrate site.

This sequence belongs to the acetylglutamate kinase family. ArgB subfamily.

The protein localises to the cytoplasm. The enzyme catalyses N-acetyl-L-glutamate + ATP = N-acetyl-L-glutamyl 5-phosphate + ADP. It participates in amino-acid biosynthesis; L-arginine biosynthesis; N(2)-acetyl-L-ornithine from L-glutamate: step 2/4. Catalyzes the ATP-dependent phosphorylation of N-acetyl-L-glutamate. The protein is Acetylglutamate kinase of Rhodopseudomonas palustris (strain ATCC BAA-98 / CGA009).